Consider the following 608-residue polypeptide: Probable cytosolic Fe-S cluster assembly factor SPAC806.02c (608 aa).

An ATP-binding site is contributed by 13–20 (GKGGVGKS). Positions 201 and 204 each coordinate [4Fe-4S] cluster. 7 WD repeats span residues 288–327 (GHTGRLWSVAAHPMLPLFATSSQDKSVRIYNSNTYNLVHV), 331–371 (FHTR…WECT), 376–415 (GHENEVKCIAWSCNGNYLATCSRDKSVWIWEATEDDEFDC), 421–460 (EHTQDVKVVTWHPTEDLLVSGSYDNSICFWRDDGDDWALT), 465–504 (GHTNTVWALAFSPNGNTLASADNDGNVFLWIKISSNEDVA), 529–567 (IHKGAVYTISWMNDATLCSAGGDGKIVVYQREKHDEALW), and 576–608 (AHGVYEINSLEYLRDDRLLSGGDDGECRVWSFK).

It in the N-terminal section; belongs to the Mrp/NBP35 ATP-binding proteins family. NUBP2/CFD1 subfamily. This sequence in the C-terminal section; belongs to the WD repeat CIA1 family. As to quaternary structure, heterotetramer of 2 nbp35 and 2 SPAC806.02c chains. [4Fe-4S] cluster is required as a cofactor.

The protein localises to the cytoplasm. It localises to the nucleus. Its function is as follows. Fusion protein of two essential components of the cytosolic iron-sulfur (Fe/S) protein assembly (CIA) machinery. Required for maturation of extramitochondrial Fe-S proteins. May form a heterotetramer with nubp35, functioning as a Fe-S scaffold complex, mediating the de novo assembly of an Fe-S cluster and its transfer to target apoproteins. This Schizosaccharomyces pombe (strain 972 / ATCC 24843) (Fission yeast) protein is Probable cytosolic Fe-S cluster assembly factor SPAC806.02c.